A 539-amino-acid polypeptide reads, in one-letter code: uncharacterized protein (539 aa).

Positions 34-63 are disordered; that stretch reads AASEVSPIPQERPTTSLRKPTPRVQRPATD. The next 11 membrane-spanning stretches (helical) occupy residues 103–123, 141–161, 184–204, 244–264, 277–299, 325–345, 360–380, 399–419, 434–454, 470–490, and 496–516; these read FATP…TTVF, MTAT…LDTV, ILLL…GILL, GIFH…IFLN, FLGA…IIYI, LAVP…LVTF, VLST…AAAA, THVS…ILFL, VVAL…ADNT, IGGV…AIIL, and WGLY…AGVE.

This sequence belongs to the multi antimicrobial extrusion (MATE) (TC 2.A.66.1) family.

The protein resides in the vacuole membrane. This is an uncharacterized protein from Schizosaccharomyces pombe (strain 972 / ATCC 24843) (Fission yeast).